Here is a 470-residue protein sequence, read N- to C-terminus: 6-phosphofructo-2-kinase/fructose-2,6-bisphosphatase (470 aa).

A 6-phosphofructo-2-kinase region spans residues Met1–Thr249. Ser31 bears the Phosphoserine; by PKA mark. Gly47 to Tyr55 lines the ATP pocket. Positions 80 and 104 each coordinate beta-D-fructose 6-phosphate. Asp130 is an active-site residue. Residues Thr132 and Arg138 each contribute to the beta-D-fructose 6-phosphate site. Residue Cys160 is part of the active site. Asn169–Lys174 lines the ATP pocket. Beta-D-fructose 6-phosphate is bound by residues Lys174, Arg195, and Tyr199. The fructose-2,6-bisphosphatase stretch occupies residues Pro250–Phe470. Residue Arg257 coordinates beta-D-fructose 2,6-bisphosphate. His258 acts as the Tele-phosphohistidine intermediate in catalysis. Beta-D-fructose 2,6-bisphosphate-binding residues include Asn264 and Gly270. Catalysis depends on Glu327, which acts as the Proton donor/acceptor. Positions 338, 352, 356, 367, 393, and 397 each coordinate beta-D-fructose 2,6-bisphosphate. Phe349–Arg352 contributes to the ATP binding site. ATP-binding positions include Gln393 to Arg397 and Tyr429.

This sequence in the C-terminal section; belongs to the phosphoglycerate mutase family. As to quaternary structure, homodimer.

The catalysed reaction is beta-D-fructose 2,6-bisphosphate + H2O = beta-D-fructose 6-phosphate + phosphate. It catalyses the reaction beta-D-fructose 6-phosphate + ATP = beta-D-fructose 2,6-bisphosphate + ADP + H(+). With respect to regulation, phosphorylation results in inhibition of the kinase activity. Synthesis and degradation of fructose 2,6-bisphosphate. The protein is 6-phosphofructo-2-kinase/fructose-2,6-bisphosphatase of Aquarana catesbeiana (American bullfrog).